A 459-amino-acid polypeptide reads, in one-letter code: DnaJ homolog subfamily A member 1 homolog (459 aa).

The J domain occupies 6–73 (EYYERLGVKP…EKRKMYDSYG (68 aa)). A CR-type zinc finger spans residues 158–243 (GKLVKISISR…CKGKRVIQGK (86 aa)). 8 residues coordinate Zn(2+): cysteine 171, cysteine 174, cysteine 188, cysteine 191, cysteine 215, cysteine 218, cysteine 231, and cysteine 234. CXXCXGXG motif repeat units follow at residues 171–178 (CKTCKGSG), 188–195 (CPTCNGSR), 215–222 (CHTCHGTG), and 231–238 (CKECKGKR). Residues 405 to 459 (NTNEQSSHGGAGGAYQQHGGAYGHQKQQQQGFNPADFGAQFGGGGPQQAQQCQQQ) are disordered. The segment covering 418–435 (AYQQHGGAYGHQKQQQQG) has biased composition (low complexity). Cysteine 456 is subject to Cysteine methyl ester. The S-farnesyl cysteine moiety is linked to residue cysteine 456. Positions 457–459 (QQQ) are cleaved as a propeptide — removed in mature form.

It localises to the membrane. The protein localises to the cytoplasm. Its subcellular location is the microsome. The protein resides in the mitochondrion. It is found in the nucleus. It localises to the perinuclear region. In terms of biological role, co-chaperone for Hsp70 family members. Plays a role in protein transport into mitochondria and in the regulation of apoptosis via its role as co-chaperone. This Dictyostelium discoideum (Social amoeba) protein is DnaJ homolog subfamily A member 1 homolog (dnaja1).